The following is a 218-amino-acid chain: Protease PrsW (218 aa).

A helical membrane pass occupies residues 1–23; sequence MFAIISAGIAPGIALLSYFYLKD. Residues 24–30 lie on the Cytoplasmic side of the membrane; the sequence is QYDNEPV. A helical membrane pass occupies residues 31-53; that stretch reads HMVLRSFFLGVVLVFPIMFIQYV. The Extracellular segment spans residues 54–98; the sequence is LEKENVGGGSFFVSFLSSGFLEESLKWFILMISVYPHAHFDEHYD. A helical membrane pass occupies residues 99-121; that stretch reads GIVYGASVSLGFATLENILYLIG. The Cytoplasmic segment spans residues 122–129; sequence HGVEHAFV. The chain crosses the membrane as a helical span at residues 130–151; sequence RALLPVSCHALIGVIMGFYLGK. Topologically, residues 152–180 are extracellular; that stretch reads ARFSADKARVKWLTLSLVVPSLLHGSYDF. The helical transmembrane segment at 181–203 threads the bilayer; sequence ILTALSNWIYYMLPFMVFLWWFG. The Cytoplasmic segment spans residues 204 to 218; the sequence is LRKAKKARSVNMMQV.

The protein belongs to the protease PrsW family.

It localises to the cell membrane. Its function is as follows. Involved in the degradation of anti-sigma-W factor RsiW. Responsible for Site-1 cleavage of the RsiW anti-sigma factor. This results, after two other proteolytic steps catalyzed by the RasP and ClpXP proteases, in the release of SigW and the transcription activation of the genes under the control of the sigma-W factor. Seems to be responsible for sensing antimicrobial peptides that damage the cell membrane and other agents that cause cell envelope stress. Therefore it is a protease governing regulated intramembrane proteolysis and resistance to antimicrobial peptides in B.subtilis. The sequence is that of Protease PrsW from Bacillus subtilis (strain 168).